The primary structure comprises 241 residues: Protein GrpE (241 aa).

Positions 28–49 are enriched in basic and acidic residues; that stretch reads QNCQKEETQTTNKDNQKEDETF. Residues 28 to 78 are disordered; the sequence is QNCQKEETQTTNKDNQKEDETFKNQPNKTKQTNTKQQKHLSKESSHQQITK. Over residues 50 to 62 the composition is skewed to low complexity; sequence KNQPNKTKQTNTK.

It belongs to the GrpE family. As to quaternary structure, homodimer.

Its subcellular location is the cytoplasm. Its function is as follows. Participates actively in the response to hyperosmotic and heat shock by preventing the aggregation of stress-denatured proteins, in association with DnaK and GrpE. It is the nucleotide exchange factor for DnaK and may function as a thermosensor. Unfolded proteins bind initially to DnaJ; upon interaction with the DnaJ-bound protein, DnaK hydrolyzes its bound ATP, resulting in the formation of a stable complex. GrpE releases ADP from DnaK; ATP binding to DnaK triggers the release of the substrate protein, thus completing the reaction cycle. Several rounds of ATP-dependent interactions between DnaJ, DnaK and GrpE are required for fully efficient folding. The protein is Protein GrpE of Aster yellows witches'-broom phytoplasma (strain AYWB).